The primary structure comprises 229 residues: Cytidylate kinase (229 aa).

12 to 20 (GPSGSGKGT) provides a ligand contact to ATP.

The protein belongs to the cytidylate kinase family. Type 1 subfamily.

The protein localises to the cytoplasm. The enzyme catalyses CMP + ATP = CDP + ADP. The catalysed reaction is dCMP + ATP = dCDP + ADP. The polypeptide is Cytidylate kinase (Pseudomonas fluorescens (strain SBW25)).